Consider the following 216-residue polypeptide: Adenylate kinase (216 aa).

Gly10–Thr15 lines the ATP pocket. Positions Ser30 to Val59 are NMP. AMP-binding positions include Thr31, Arg36, Gln57–Val59, Gly85–Arg88, and Gln92. The tract at residues Gly126–Asp163 is LID. Arg127 provides a ligand contact to ATP. The Zn(2+) site is built by Cys130 and Cys133. Ser136–Tyr137 is an ATP binding site. 2 residues coordinate Zn(2+): Cys150 and Cys153. Residues Arg160 and Arg171 each contribute to the AMP site. Residue Lys199 participates in ATP binding.

This sequence belongs to the adenylate kinase family. As to quaternary structure, monomer.

It localises to the cytoplasm. It carries out the reaction AMP + ATP = 2 ADP. It participates in purine metabolism; AMP biosynthesis via salvage pathway; AMP from ADP: step 1/1. Functionally, catalyzes the reversible transfer of the terminal phosphate group between ATP and AMP. Plays an important role in cellular energy homeostasis and in adenine nucleotide metabolism. The protein is Adenylate kinase of Clostridium beijerinckii (strain ATCC 51743 / NCIMB 8052) (Clostridium acetobutylicum).